Here is a 142-residue protein sequence, read N- to C-terminus: Ribosome-binding factor A (142 aa).

Residues 120–130 (EVRRDIDHAPA) are compositionally biased toward basic and acidic residues. A disordered region spans residues 120-142 (EVRRDIDHAPAEDEFPTDGDDGQ). Over residues 131–142 (EDEFPTDGDDGQ) the composition is skewed to acidic residues.

The protein belongs to the RbfA family. In terms of assembly, monomer. Binds 30S ribosomal subunits, but not 50S ribosomal subunits or 70S ribosomes.

It localises to the cytoplasm. One of several proteins that assist in the late maturation steps of the functional core of the 30S ribosomal subunit. Associates with free 30S ribosomal subunits (but not with 30S subunits that are part of 70S ribosomes or polysomes). Required for efficient processing of 16S rRNA. May interact with the 5'-terminal helix region of 16S rRNA. The polypeptide is Ribosome-binding factor A (Paramagnetospirillum magneticum (strain ATCC 700264 / AMB-1) (Magnetospirillum magneticum)).